Consider the following 134-residue polypeptide: Small ribosomal subunit protein uS8c (134 aa).

The protein belongs to the universal ribosomal protein uS8 family. In terms of assembly, part of the 30S ribosomal subunit.

Its subcellular location is the plastid. The protein resides in the chloroplast. Its function is as follows. One of the primary rRNA binding proteins, it binds directly to 16S rRNA central domain where it helps coordinate assembly of the platform of the 30S subunit. The sequence is that of Small ribosomal subunit protein uS8c (rps8) from Populus alba (White poplar).